The sequence spans 407 residues: Phosphopentomutase (407 aa).

6 residues coordinate Mn(2+): Asp10, Asp306, His311, Asp347, His348, and His359.

The protein belongs to the phosphopentomutase family. The cofactor is Mn(2+).

It is found in the cytoplasm. It catalyses the reaction 2-deoxy-alpha-D-ribose 1-phosphate = 2-deoxy-D-ribose 5-phosphate. The enzyme catalyses alpha-D-ribose 1-phosphate = D-ribose 5-phosphate. The protein operates within carbohydrate degradation; 2-deoxy-D-ribose 1-phosphate degradation; D-glyceraldehyde 3-phosphate and acetaldehyde from 2-deoxy-alpha-D-ribose 1-phosphate: step 1/2. Isomerase that catalyzes the conversion of deoxy-ribose 1-phosphate (dRib-1-P) and ribose 1-phosphate (Rib-1-P) to deoxy-ribose 5-phosphate (dRib-5-P) and ribose 5-phosphate (Rib-5-P), respectively. This chain is Phosphopentomutase, found in Buchnera aphidicola subsp. Acyrthosiphon pisum (strain APS) (Acyrthosiphon pisum symbiotic bacterium).